A 233-amino-acid polypeptide reads, in one-letter code: Orotidine 5'-phosphate decarboxylase (233 aa).

Substrate is bound by residues D9, K31, 58 to 67 (DLKLHDIPNT), T120, R182, Q191, G211, and R212. K60 acts as the Proton donor in catalysis.

Belongs to the OMP decarboxylase family. Type 1 subfamily. In terms of assembly, homodimer.

It catalyses the reaction orotidine 5'-phosphate + H(+) = UMP + CO2. Its pathway is pyrimidine metabolism; UMP biosynthesis via de novo pathway; UMP from orotate: step 2/2. Functionally, catalyzes the decarboxylation of orotidine 5'-monophosphate (OMP) to uridine 5'-monophosphate (UMP). The polypeptide is Orotidine 5'-phosphate decarboxylase (Listeria monocytogenes serotype 4a (strain HCC23)).